The following is a 340-amino-acid chain: Glyceraldehyde-3-phosphate dehydrogenase, cytosolic (340 aa).

NAD(+) is bound by residues 16-17 (RI), aspartate 38, and arginine 85. Residues 156–158 (SCT), threonine 187, 216–217 (TG), and arginine 239 contribute to the D-glyceraldehyde 3-phosphate site. The Nucleophile role is filled by cysteine 157. NAD(+) is bound at residue asparagine 321.

Belongs to the glyceraldehyde-3-phosphate dehydrogenase family. Homotetramer.

It is found in the cytoplasm. The catalysed reaction is D-glyceraldehyde 3-phosphate + phosphate + NAD(+) = (2R)-3-phospho-glyceroyl phosphate + NADH + H(+). It participates in carbohydrate degradation; glycolysis; pyruvate from D-glyceraldehyde 3-phosphate: step 1/5. In terms of biological role, key enzyme in glycolysis that catalyzes the first step of the pathway by converting D-glyceraldehyde 3-phosphate (G3P) into 3-phospho-D-glyceroyl phosphate. Essential for the maintenance of cellular ATP levels and carbohydrate metabolism. The chain is Glyceraldehyde-3-phosphate dehydrogenase, cytosolic from Taxus baccata (English yew).